The sequence spans 183 residues: MKNVTHSFVFLAHWPSAGSFGLNTNILATNLINLTVVVGVLIFFGKGVLKDLLDNRKQRILSTIRNSEELRRGTIEKLEKARIRLQKVELEADEYRMNGYSDIEREKANLINATSISLEQLEKSKNETLYFEKQRAMNQVRQRVFQQAVQGALGTLNSCLNTELHFRTIRANIGILGSMEWKR.

A helical transmembrane segment spans residues 27–49 (LATNLINLTVVVGVLIFFGKGVL).

It belongs to the ATPase B chain family. F-type ATPases have 2 components, F(1) - the catalytic core - and F(0) - the membrane proton channel. F(1) has five subunits: alpha(3), beta(3), gamma(1), delta(1), epsilon(1). F(0) has four main subunits: a(1), b(1), b'(1) and c(10-14). The alpha and beta chains form an alternating ring which encloses part of the gamma chain. F(1) is attached to F(0) by a central stalk formed by the gamma and epsilon chains, while a peripheral stalk is formed by the delta, b and b' chains.

The protein localises to the plastid. It localises to the chloroplast thylakoid membrane. Functionally, f(1)F(0) ATP synthase produces ATP from ADP in the presence of a proton or sodium gradient. F-type ATPases consist of two structural domains, F(1) containing the extramembraneous catalytic core and F(0) containing the membrane proton channel, linked together by a central stalk and a peripheral stalk. During catalysis, ATP synthesis in the catalytic domain of F(1) is coupled via a rotary mechanism of the central stalk subunits to proton translocation. Its function is as follows. Component of the F(0) channel, it forms part of the peripheral stalk, linking F(1) to F(0). This chain is ATP synthase subunit b, chloroplastic, found in Lolium perenne (Perennial ryegrass).